The primary structure comprises 203 residues: Enterotoxin-like toxin X (203 aa).

Residues 164–180 (YTLESHKELQKNRENVE) form a sialic acid-binding motif region.

The protein belongs to the staphylococcal/streptococcal toxin family.

It is found in the secreted. In terms of biological role, plays a role in the inhibition of the host innate immune system. Inhibits phagocytosis and killing by human neutrophils by interacting with multiple neutrophil surface glycoproteins in a sialic acid-dependent manner. The polypeptide is Enterotoxin-like toxin X (Staphylococcus aureus).